The sequence spans 598 residues: Polypeptide N-acetylgalactosaminyltransferase 17 (598 aa).

Residues 1 to 6 (MASLRR) lie on the Cytoplasmic side of the membrane. Residues 7-27 (VKVLLVLNLIAVAGFVIFLAK) traverse the membrane as a helical; Signal-anchor for type II membrane protein segment. Topologically, residues 28-598 (CRPIAVRSGD…QRWAIKNPIK (571 aa)) are lumenal. The N-linked (GlcNAc...) asparagine glycan is linked to N50. 2 disulfides stabilise this stretch: C142–C373 and C364–C443. Positions 151–262 (LPQISIIFIF…AGWAEPVLSR (112 aa)) are catalytic subdomain A. Residues D192 and R223 each contribute to the substrate site. 3 residues coordinate Mn(2+): D246, H248, and H378. Residues 319–381 (PIRTPAMIGC…PCSRVAHIER (63 aa)) are catalytic subdomain B. Substrate is bound by residues R381 and Y386. N461 and N486 each carry an N-linked (GlcNAc...) asparagine glycan. One can recognise a Ricin B-type lectin domain in the interval 465 to 594 (AYGELRNNKA…SCTGQRWAIK (130 aa)). 3 disulfide bridges follow: C478–C494, C526–C541, and C568–C586.

Belongs to the glycosyltransferase 2 family. GalNAc-T subfamily. Mn(2+) serves as cofactor.

The protein resides in the golgi apparatus membrane. It carries out the reaction L-seryl-[protein] + UDP-N-acetyl-alpha-D-galactosamine = a 3-O-[N-acetyl-alpha-D-galactosaminyl]-L-seryl-[protein] + UDP + H(+). The enzyme catalyses L-threonyl-[protein] + UDP-N-acetyl-alpha-D-galactosamine = a 3-O-[N-acetyl-alpha-D-galactosaminyl]-L-threonyl-[protein] + UDP + H(+). It participates in protein modification; protein glycosylation. May catalyze the initial reaction in O-linked oligosaccharide biosynthesis, the transfer of an N-acetyl-D-galactosamine residue to a serine or threonine residue on the protein receptor. This is Polypeptide N-acetylgalactosaminyltransferase 17 from Mus musculus (Mouse).